Reading from the N-terminus, the 106-residue chain is Small ribosomal subunit protein uS10 (106 aa).

The protein belongs to the universal ribosomal protein uS10 family. Part of the 30S ribosomal subunit.

Its function is as follows. Involved in the binding of tRNA to the ribosomes. The chain is Small ribosomal subunit protein uS10 from Pyrobaculum islandicum (strain DSM 4184 / JCM 9189 / GEO3).